A 249-amino-acid polypeptide reads, in one-letter code: Putative TrmH family tRNA/rRNA methyltransferase (249 aa).

S-adenosyl-L-methionine is bound by residues glycine 196, isoleucine 216, and leucine 225.

Belongs to the class IV-like SAM-binding methyltransferase superfamily. RNA methyltransferase TrmH family.

The sequence is that of Putative TrmH family tRNA/rRNA methyltransferase from Staphylococcus saprophyticus subsp. saprophyticus (strain ATCC 15305 / DSM 20229 / NCIMB 8711 / NCTC 7292 / S-41).